The chain runs to 231 residues: Large ribosomal subunit protein uL1 (231 aa).

The protein belongs to the universal ribosomal protein uL1 family. Part of the 50S ribosomal subunit.

Its function is as follows. Binds directly to 23S rRNA. The L1 stalk is quite mobile in the ribosome, and is involved in E site tRNA release. Functionally, protein L1 is also a translational repressor protein, it controls the translation of the L11 operon by binding to its mRNA. The sequence is that of Large ribosomal subunit protein uL1 from Acetivibrio thermocellus (strain ATCC 27405 / DSM 1237 / JCM 9322 / NBRC 103400 / NCIMB 10682 / NRRL B-4536 / VPI 7372) (Clostridium thermocellum).